Here is a 597-residue protein sequence, read N- to C-terminus: tRNA uridine 5-carboxymethylaminomethyl modification enzyme MnmG (597 aa).

Gly10–Gly15 provides a ligand contact to FAD. Gly267–Phe281 is an NAD(+) binding site.

This sequence belongs to the MnmG family. As to quaternary structure, homodimer. Heterotetramer of two MnmE and two MnmG subunits. Requires FAD as cofactor.

The protein localises to the cytoplasm. Functionally, NAD-binding protein involved in the addition of a carboxymethylaminomethyl (cmnm) group at the wobble position (U34) of certain tRNAs, forming tRNA-cmnm(5)s(2)U34. The chain is tRNA uridine 5-carboxymethylaminomethyl modification enzyme MnmG from Thermus thermophilus (strain ATCC BAA-163 / DSM 7039 / HB27).